A 259-amino-acid chain; its full sequence is Acyl-[acyl-carrier-protein]--UDP-N-acetylglucosamine O-acyltransferase (259 aa).

This sequence belongs to the transferase hexapeptide repeat family. LpxA subfamily. In terms of assembly, homotrimer.

Its subcellular location is the cytoplasm. The enzyme catalyses a (3R)-hydroxyacyl-[ACP] + UDP-N-acetyl-alpha-D-glucosamine = a UDP-3-O-[(3R)-3-hydroxyacyl]-N-acetyl-alpha-D-glucosamine + holo-[ACP]. Its pathway is glycolipid biosynthesis; lipid IV(A) biosynthesis; lipid IV(A) from (3R)-3-hydroxytetradecanoyl-[acyl-carrier-protein] and UDP-N-acetyl-alpha-D-glucosamine: step 1/6. Its function is as follows. Involved in the biosynthesis of lipid A, a phosphorylated glycolipid that anchors the lipopolysaccharide to the outer membrane of the cell. This Psychrobacter cryohalolentis (strain ATCC BAA-1226 / DSM 17306 / VKM B-2378 / K5) protein is Acyl-[acyl-carrier-protein]--UDP-N-acetylglucosamine O-acyltransferase.